Consider the following 378-residue polypeptide: Cytochrome b (378 aa).

Transmembrane regions (helical) follow at residues 34–54 (FGSL…FLAM), 78–99 (WLLR…YLHV), 114–134 (WLIG…GYVL), and 179–199 (FFTF…IHLL). Residues His84 and His98 each contribute to the heme b site. Heme b-binding residues include His183 and His197. Residue His202 coordinates a ubiquinone. 4 helical membrane passes run 227 to 247 (FKDI…VLIS), 289 to 309 (LGGV…PFYN), 321 to 341 (INQV…WIGA), and 348 to 368 (YVLI…VNPL).

It belongs to the cytochrome b family. As to quaternary structure, the main subunits of complex b-c1 are: cytochrome b, cytochrome c1 and the Rieske protein. Heme b is required as a cofactor.

Its subcellular location is the mitochondrion inner membrane. Functionally, component of the ubiquinol-cytochrome c reductase complex (complex III or cytochrome b-c1 complex) that is part of the mitochondrial respiratory chain. The b-c1 complex mediates electron transfer from ubiquinol to cytochrome c. Contributes to the generation of a proton gradient across the mitochondrial membrane that is then used for ATP synthesis. This Drosophila simulans (Fruit fly) protein is Cytochrome b (mt:Cyt-b).